Reading from the N-terminus, the 118-residue chain is Large ribosomal subunit protein bL20 (118 aa).

Belongs to the bacterial ribosomal protein bL20 family.

Binds directly to 23S ribosomal RNA and is necessary for the in vitro assembly process of the 50S ribosomal subunit. It is not involved in the protein synthesizing functions of that subunit. This Ectopseudomonas mendocina (strain ymp) (Pseudomonas mendocina) protein is Large ribosomal subunit protein bL20.